A 314-amino-acid polypeptide reads, in one-letter code: MGLEAARELECAALGTLLRDPREAERTLLLDCRPFLAFCRRHVRAARPVPWNALLRRRARGPPAAVLACLLPDRALRTRLVRGELARAVVLDEGSASVAELRPDSPAHVLLAALLHETRAGPTAVYFLRGGFDGFQGCCPDLCSEAPAPALPPTGDKTSRSDSRAPVYDQGGPVEILPYLFLGSCSHSSDLQGLQACGITAVLNVSASCPNHFEGLFRYKSIPVEDNQMVEISAWFQEAIGFIDWVKNSGGRVLVHCQAGISRSATICLAYLMQSRRVRLDEAFDFVKQRRGVISPNFSFMGQLLQFETQVLCH.

Residues Glu23–Ser144 enclose the Rhodanese domain. One can recognise a Tyrosine-protein phosphatase domain in the interval Gly172 to Cys313. Cys257 (phosphocysteine intermediate) is an active-site residue.

Belongs to the protein-tyrosine phosphatase family. Non-receptor class dual specificity subfamily. In terms of assembly, interacts with MAPK14; this interaction does not lead to catalytic activation of DUSP2 and dephosphrylation of MAPK14. Expressed in hematopoietic tissues.

Its subcellular location is the nucleus. The enzyme catalyses O-phospho-L-tyrosyl-[protein] + H2O = L-tyrosyl-[protein] + phosphate. It carries out the reaction O-phospho-L-threonyl-[protein] + H2O = L-threonyl-[protein] + phosphate. Dephosphorylates both phosphorylated Thr and Tyr residues in MAPK1, and dephosphorylation of phosphotyrosine is slightly faster than that of phosphothreonine. Can dephosphorylate MAPK1. This is Dual specificity protein phosphatase 2 from Homo sapiens (Human).